The sequence spans 291 residues: Undecaprenyl-diphosphatase (291 aa).

8 consecutive transmembrane segments (helical) span residues 1–21 (MFIIELIKGIILGVVEGLTEF), 48–68 (SAFTFKIVIQLGSVFAAAWVF), 102–122 (LHVLVGMVPAGILGLLFDDFI), 126–146 (LFSVPTVMIGLFVGAIYMIIA), 162–182 (INYFQAFVIGISQAVAMWPGF), 203–223 (SDFTFIMAVPIMLAASGLSLL), 231–251 (IADIPFYILGFLAAFTVGLIA), and 267–287 (FAIYRIVLVIFIAILYFGFGI).

Belongs to the UppP family.

It localises to the cell membrane. The enzyme catalyses di-trans,octa-cis-undecaprenyl diphosphate + H2O = di-trans,octa-cis-undecaprenyl phosphate + phosphate + H(+). Catalyzes the dephosphorylation of undecaprenyl diphosphate (UPP). Confers resistance to bacitracin. The polypeptide is Undecaprenyl-diphosphatase (Staphylococcus aureus (strain Mu3 / ATCC 700698)).